The chain runs to 454 residues: Bifunctional protein GlmU (454 aa).

A pyrophosphorylase region spans residues 1–228 (MNKCAIILAA…FEETLGVNSR (228 aa)). UDP-N-acetyl-alpha-D-glucosamine is bound by residues 8 to 11 (LAAG), K22, Q73, and 78 to 79 (GT). D103 lines the Mg(2+) pocket. UDP-N-acetyl-alpha-D-glucosamine-binding residues include G140, E154, N169, and N226. N226 lines the Mg(2+) pocket. Residues 229-249 (AELAKVESIMRNRINRTHLDN) are linker. An N-acetyltransferase region spans residues 250–454 (GVTIIDPLNT…EGWVERKKLK (205 aa)). R331 and K349 together coordinate UDP-N-acetyl-alpha-D-glucosamine. H361 (proton acceptor) is an active-site residue. Positions 364 and 375 each coordinate UDP-N-acetyl-alpha-D-glucosamine. Acetyl-CoA-binding positions include 384–385 (NY), A421, and R438.

The protein in the N-terminal section; belongs to the N-acetylglucosamine-1-phosphate uridyltransferase family. In the C-terminal section; belongs to the transferase hexapeptide repeat family. As to quaternary structure, homotrimer. It depends on Mg(2+) as a cofactor.

The protein localises to the cytoplasm. It carries out the reaction alpha-D-glucosamine 1-phosphate + acetyl-CoA = N-acetyl-alpha-D-glucosamine 1-phosphate + CoA + H(+). The enzyme catalyses N-acetyl-alpha-D-glucosamine 1-phosphate + UTP + H(+) = UDP-N-acetyl-alpha-D-glucosamine + diphosphate. Its pathway is nucleotide-sugar biosynthesis; UDP-N-acetyl-alpha-D-glucosamine biosynthesis; N-acetyl-alpha-D-glucosamine 1-phosphate from alpha-D-glucosamine 6-phosphate (route II): step 2/2. The protein operates within nucleotide-sugar biosynthesis; UDP-N-acetyl-alpha-D-glucosamine biosynthesis; UDP-N-acetyl-alpha-D-glucosamine from N-acetyl-alpha-D-glucosamine 1-phosphate: step 1/1. It participates in bacterial outer membrane biogenesis; LPS lipid A biosynthesis. Functionally, catalyzes the last two sequential reactions in the de novo biosynthetic pathway for UDP-N-acetylglucosamine (UDP-GlcNAc). The C-terminal domain catalyzes the transfer of acetyl group from acetyl coenzyme A to glucosamine-1-phosphate (GlcN-1-P) to produce N-acetylglucosamine-1-phosphate (GlcNAc-1-P), which is converted into UDP-GlcNAc by the transfer of uridine 5-monophosphate (from uridine 5-triphosphate), a reaction catalyzed by the N-terminal domain. This is Bifunctional protein GlmU from Clostridium perfringens (strain SM101 / Type A).